We begin with the raw amino-acid sequence, 1125 residues long: Transcription-repair-coupling factor (1125 aa).

The Helicase ATP-binding domain maps to 597 to 758 (DMMSFKVMDR…LIKLRDISVL (162 aa)). 610-617 (GDVGFGKT) contributes to the ATP binding site. Residues 711–714 (DEEQ) carry the DEEQ box motif. Positions 774-933 (SFSELLIKHA…GFKIAMKDME (160 aa)) constitute a Helicase C-terminal domain.

In the N-terminal section; belongs to the UvrB family. The protein in the C-terminal section; belongs to the helicase family. RecG subfamily.

Its subcellular location is the cytoplasm. In terms of biological role, couples transcription and DNA repair by recognizing RNA polymerase (RNAP) stalled at DNA lesions. Mediates ATP-dependent release of RNAP and its truncated transcript from the DNA, and recruitment of nucleotide excision repair machinery to the damaged site. The polypeptide is Transcription-repair-coupling factor (Borreliella burgdorferi (strain ATCC 35210 / DSM 4680 / CIP 102532 / B31) (Borrelia burgdorferi)).